The following is a 472-amino-acid chain: MSRISIQDFKESLGITESYDIINAIINENPRFSEFSTLANAQDVANFGIGLLADKTLQNDFIHTLVDRIGLVVVHHKLMQNPLKIFKKGTLEYGRKIEEIFTDLTREHVYDPEKAETEVFKREIPNVKTLFHERDRQVFYKQTISDQQLKTAFTNAQKFDEFLSTIVTSIYNSAEVDEFRYTKLLIDNYFSKNLFKIVPVSVDPATGIVNTKEFLAKTRATATKMTLPMGTRDFNSMAVHTRTDMDDLYIIMDADTQAEVDVNELASAFNLNKADFIGRRILIDGFASTGLKAVMVDKDFFMLYDQVFRMESQRNAQGMYWNYYLHVWQVLSTSRFANAVAFVDSALIDGDVSQVIVTPTVGSLKSGKSLDMEAIIRTITPNVQIEDVEWSLENVGLSSAEYATVSITANENKTGAKLVSAQPLPVGGDVRVKVTVTDPKNNKDIEGEAHISIIPDFNATPIQTPVDPPSGE.

This sequence belongs to the phi29 phage major capsid protein family.

Its subcellular location is the virion. Assembles to form a prolate capsid of about 45x54 nm, with a T=3, Q=5 symmetry. This chain is Major capsid protein (8), found in Bacillus phage GA-1 (Bacteriophage GA-1).